The following is a 512-amino-acid chain: MEATDPSAEIELYTIPAQSSWFLWDDIHEIERREFAEFFTESSITRTPKVYKEYRDFIINKFREDTCRRLTFTSVRKFLVGDVNLLQKVFLFLEKWGLINFSSSLKKNDHLLSVDNAKIEQGTPAGIRVTATPNSLRPITAPPLVEERVETGIKVPPLTSYSDVFSDLKKPDHVLVCAHCGERCDSPFYQHNKGIVNICEKCFKNGNYGENNTADDFKLIGNSAAAVWTEEEILLLLESVLKHGDDWELISQSVSTKSRLDCISKLIELPFGEFLMGSASGRLNPSILTEDENTEQVQTDGQEHEETETREEKEDRVNEDEPPAKRKRVALISEGDSSLMKQVAAMASKVGPSVATAAAKAALAALCDEASCPKEIFDTDDYSNFTVDRANGEKDTDMEEQQEEKDGPQGLPVALRIRASVATALGAAAAQAKILADQEEREMEQLAATVIEQQLKKLQSKLKFLDDLESIMDEEEKVIEGVKETIIQERVSVLQCAFRSGITKRWDHTYVK.

Residues 13–110 enclose the SWIRM domain; that stretch reads YTIPAQSSWF…FSSSLKKNDH (98 aa). In terms of domain architecture, SANT spans 223–274; sequence SAAAVWTEEEILLLLESVLKHGDDWELISQSVSTKSRLDCISKLIELPFGEF. Residues 291–325 form a disordered region; that stretch reads DENTEQVQTDGQEHEETETREEKEDRVNEDEPPAK. A coiled-coil region spans residues 424–488; the sequence is ALGAAAAQAK…IEGVKETIIQ (65 aa).

In terms of assembly, homodimers and heterodimers. Interacts with SWI3B, SWI3C, BSH, and the C-terminus of FCA, but not with BRM or SWI3D. In terms of tissue distribution, expressed in roots, stems, leaves and flowers, but not in siliques.

Its subcellular location is the nucleus. In terms of biological role, component of a multiprotein complex equivalent of the SWI/SNF complex, an ATP-dependent chromatin-remodeling complex, which is required for the positive and negative regulation of gene expression of a large number of genes. It changes chromatin structure by altering DNA-histone contacts within a nucleosome, leading eventually to a change in nucleosome position, thus facilitating or repressing binding of gene-specific transcription factors. The sequence is that of SWI/SNF complex subunit SWI3A (SWI3A) from Arabidopsis thaliana (Mouse-ear cress).